A 503-amino-acid polypeptide reads, in one-letter code: Transmembrane protein 184C (503 aa).

7 helical membrane-spanning segments follow: residues 17–37, 48–68, 83–103, 115–135, 212–232, 254–274, and 287–307; these read LLILLYALAILVTVPVCIWEF, VWFIAGIFLLLTIPVSMCGIL, IIRILWMVPIYSLDSWVALKY, ECYEAYVIYNFMIFLTNYLTI, YLVILNNLSQLFAMYCLLLFY, VVFVSFWQAVLIALLVKVGVI, and AVATGLQDFIICIEMFFAAIA. 2 disordered regions span residues 358–391 and 479–503; these read PKKKCFPGDPDHNEHSSLLSASSQDSSKPSSPVG and SPKPSDDIVIDFSDSPEGSDSSTDS. Over residues 373 to 388 the composition is skewed to low complexity; it reads SSLLSASSQDSSKPSS. The span at 494-503 shows a compositional bias: polar residues; it reads PEGSDSSTDS.

This sequence belongs to the TMEM184 family.

The protein localises to the membrane. Possible tumor suppressor which may play a role in cell growth. The protein is Transmembrane protein 184C (Tmem184c) of Rattus norvegicus (Rat).